The primary structure comprises 413 residues: 3-isopropylmalate dehydratase large subunit (413 aa).

Cys-295, Cys-353, and Cys-356 together coordinate [4Fe-4S] cluster.

Belongs to the aconitase/IPM isomerase family. LeuC type 2 subfamily. As to quaternary structure, heterodimer of LeuC and LeuD. [4Fe-4S] cluster is required as a cofactor.

The catalysed reaction is (2R,3S)-3-isopropylmalate = (2S)-2-isopropylmalate. Its pathway is amino-acid biosynthesis; L-leucine biosynthesis; L-leucine from 3-methyl-2-oxobutanoate: step 2/4. Functionally, catalyzes the isomerization between 2-isopropylmalate and 3-isopropylmalate, via the formation of 2-isopropylmaleate. This chain is 3-isopropylmalate dehydratase large subunit, found in Pyrobaculum calidifontis (strain DSM 21063 / JCM 11548 / VA1).